Reading from the N-terminus, the 405-residue chain is Cystathionine gamma-lyase (405 aa).

Substrate contacts are provided by Arg62, Tyr114, and Arg119. The residue at position 212 (Lys212) is an N6-(pyridoxal phosphate)lysine. Glu339 contributes to the substrate binding site.

Belongs to the trans-sulfuration enzymes family. As to quaternary structure, homotetramer. Interacts with CALM in a calcium-dependent manner. The cofactor is pyridoxal 5'-phosphate.

Its subcellular location is the cytoplasm. It catalyses the reaction L,L-cystathionine + H2O = 2-oxobutanoate + L-cysteine + NH4(+). The enzyme catalyses L-cysteine + H2O = hydrogen sulfide + pyruvate + NH4(+) + H(+). It carries out the reaction L-homocysteine + H2O = 2-oxobutanoate + hydrogen sulfide + NH4(+) + H(+). The catalysed reaction is L-homoserine = 2-oxobutanoate + NH4(+). It catalyses the reaction L-selenocystathionine + H2O = L-selenocysteine + 2-oxobutanoate + NH4(+). It participates in amino-acid biosynthesis; L-cysteine biosynthesis; L-cysteine from L-homocysteine and L-serine: step 2/2. Catalyzes the last step in the trans-sulfuration pathway from L-methionine to L-cysteine in a pyridoxal-5'-phosphate (PLP)-dependent manner, which consists on cleaving the L,L-cystathionine molecule into L-cysteine, ammonia and 2-oxobutanoate. Part of the L-cysteine derived from the trans-sulfuration pathway is utilized for biosynthesis of the ubiquitous antioxidant glutathione. Besides its role in the conversion of L-cystathionine into L-cysteine, it utilizes L-cysteine and L-homocysteine as substrates (at much lower rates than L,L-cystathionine) to produce hydrogen sulfide (H2S). In vitro, it converts two L-cysteine molecules into lanthionine and H2S, and two L-homocysteine molecules to homolanthionine and H2S, which can be particularly relevant under conditions of severe hyperhomocysteinemia. Lanthionine and homolanthionine are structural homologs of L,L-cystathionine that differ by the absence or presence of an extra methylene group, respectively. Acts as a cysteine-protein sulfhydrase by mediating sulfhydration of target proteins: sulfhydration consists of converting -SH groups into -SSH on specific cysteine residues of target proteins such as GAPDH, PTPN1 and NF-kappa-B subunit RELA, thereby regulating their function. By generating the gasotransmitter H2S, it participates in a number of physiological processes such as vasodilation, bone protection, and inflammation. Plays an essential role in myogenesis by contributing to the biogenesis of H2S in skeletal muscle tissue. Can also accept homoserine as substrate. Catalyzes the elimination of selenocystathionine (which can be derived from the diet) to yield selenocysteine, ammonia and 2-oxobutanoate. This is Cystathionine gamma-lyase (CTH) from Macaca fascicularis (Crab-eating macaque).